Reading from the N-terminus, the 77-residue chain is MSNIEERVKKIIVEQLGVKEEDVKPAASFVDDLGADSLDTVELVMALEEEFDTEIPDEEAEKITTVQAAIDYVSKNQ.

The Carrier domain occupies 2-77 (SNIEERVKKI…AAIDYVSKNQ (76 aa)). Serine 37 is subject to O-(pantetheine 4'-phosphoryl)serine.

Belongs to the acyl carrier protein (ACP) family. In terms of processing, 4'-phosphopantetheine is transferred from CoA to a specific serine of apo-ACP by AcpS. This modification is essential for activity because fatty acids are bound in thioester linkage to the sulfhydryl of the prosthetic group.

The protein resides in the cytoplasm. It functions in the pathway lipid metabolism; fatty acid biosynthesis. Carrier of the growing fatty acid chain in fatty acid biosynthesis. This is Acyl carrier protein from Shewanella oneidensis (strain ATCC 700550 / JCM 31522 / CIP 106686 / LMG 19005 / NCIMB 14063 / MR-1).